Reading from the N-terminus, the 4555-residue chain is MGVTMRHCIDTRPPSCLIFLLLKLCATVSQGLPGTGPLGFHFTHALYNATVYENSAARTYVNSQSRMGITLIDLSWDIKYRIVSGDEEGFFKAEEVIIADFCFLRIRTKGGNSAILNREIQDNYLLIIKGSVRGEDLEAWTKVNIQVLDMNDLRPLFSPTTYSVTIAESTPLRTSVAQVTATDADIGSNGEFYYYFKNKVDLFSVHPTSGVISLSGRLNYDEKNRYDLEILAVDRGMKLYGNNGVSSTAKLYVHIERINEHAPIIHVVTHTPFSLDKEPTYAVVTVDDLDEGANGEIESVSIVDGDPLEQFFLAKEGKWMNEYKVKERRQVDWESFSYGYNLTIQAKDKGSPQKFSELKTVHIANPRRDSTPIKFEKDVYDISISEFSPPGVMVAIVKVNPEPLDVEYKLLPGKDAEYFKINPRSGLIVTAQPLNTVKKEVYKLEVSDKEGDAKAQVTIGIEDANDHTPEFQETLYETFVNESVPVGTNVLTVSASDKDKGENGYITYSIASLNLLPFAINQFTGVISTTEELDFESSPETYRFIVRASDWGSPYRHESEVNVTIRVGNVNDNSPLFEKVACQGVISYDFPVGGHITAISAIDIDELELVKYKIISGNELGFFYLNPDSGVLQLKKSLMNSGIKNGNFALRITATDGENFADPMAINISVLHGKVSSKSFSCRETRVAQKLAEKLLIKAKANGKLNQEDGFLDFYSINRQGPHFDKSFPSDVAVKENMPVGTNILKIKAYDADSGFNGKVLFTISDGNTDSCFNIDMETGQLKVLMPMDREHTDLYVLNITIYDLGKPQKSSWRLLTVNVEDANDNSPVFLQDSYSVSILESSSIGTEIIQVEARDKDLGSNGEVTYSVLTDTHQFVINSSTGIVYIADQLDRESKANYSLKIEARDKAESGQQLFSVVTLKIFLDDVNDCSPAFIPSSYSVKVLEDLPVGTVIAWLETQDPDLGLGGQVRYSLVNDYNGRFEIDKASGAIRLSKELDYEKQQFYNLTVRAKDKGRPVSLSSISFVEVEVVDVNENLHTPYFPDFAVVGSVKENSRIGTSVLQVTAHDEDSGRDGEIQYSIRDGSGLGRFNIDDESGVITAADILDRETTASYWLTVYATDRGVVPLYSTIEVYIEVEDVNDNAPLTSEPIYYPVVMENSPKDVSVIQIQAEDPDSGSNEKLTYRITSGNPQNFFAINIKTGLITTTSRKLDREQQAEHFLEVTVTDGGSSPKQSTIWVVVQVLDENDNKPQFPEKVYQIKLPERDRKKRGEPIYRAFAFDRDEGPNAEISYSIVDGNDDGKFFIDPKTGMVSSRKQFTAGSYDILTIKAVDNGRPQKSSTARLHIEWIKKPPPSPIPLTFDEPFYNFTIMESDKVTEIVGVVSVQPANTPLWFDIIGGNFDSSFDAEKGVGTIVIAKPLDAEQRSVYNMSVEVTDGTNVAVTQVFITVLDNNDNGPEFSQPHYDVTISEDVPPDTEILQIEATDRDEKHKLSYTIHSSIDAISMRKFRIDPSTGVLYTAERLDHEAQDKHILNIMVRDQEFPYRRNLARVIVNVEDANDHSPYFTNPLYEASVFESAALGSVVLQVTALDKDKGENAELIYSIEAGNTGNTFKIEPVLGIITISKEPDMTAMGQFVLSVKVTDQGSPPMSATAIVRISISMSDNSHPKFTHKDYQAEVNENVDIGTSVILISAISQSTLIYEVKDGNINGVFTINPYSGVITTRRALDYEHTSSYQLIIQATNMAGMASNATVSVQVVDENDNPPVFLFSQYSGSLSEAAPINSLVRSLDNSPLVIRATDADSNQNALLVYQIVESTAKKFFTVDSSTGAIRTIANLDHEVIAHFHFHVHVRDSGNPQLTAESPVEVNIEVTDVNDNPPVFTQAVFETVLLLPTYVGVEVLKVSATDPDSEVPPELTYSLMEGSVDHFLMDPNTGVLTIKNNNLSKDHYMLIVRVSDGKFYSTAMVTIMVKEAMDSGLHFTQSFYSTSISENSTNITKVAIVNAVGNRLNEPLKYSILNPGNKFKIKSTSGVIQTTGVPFDREEQELYELVVEASRELDHLRVARVVVRVNIEDVNDNSPVFVGLPYYAAVQVDAEPGTLIYRVTAIDKDKGANGEVTYVLQDDYGHFEINPNSGNVILKEAFNSDLSNIDYGVTILAKDGGTPSLSTFVELPITIVNKAMPVFDKPFYTASINEDISINTPILSINATSPEGQGIIYLIIDGDPFQQFNIDFDTGVLKVISPLDYEVMSVYKLTVRASDALTGARAEVTVDLLVDDVNDNPPVFDQPTYNTTLSESSLIGTPVLQLVSTDADSGNNNLVHYQIVQDTYNSTDYFHIDSSSGLILTARMLDHELVQHCTLKVTATDNGFPSLSSEVLVQIYISDVNDNPPVFNQLIYESYVSELAPRGHFVTCVQASDADSSDFDRLEYSILSGNDRTSFLMDSKSGVLTLSSHRKQRMEPLYSLNVSVSDGLFTSTAQVHIRVLGANLYSPAFSQSTYVAEVRENAASGTKVIHVRATDGDPGTYGQVSYSIINDFAKDRFLIDSNGQIITTERLDRENPLEGDISIYLRALDGGGRTTFCTVRVIVVDENDNAPQFMTLEYRASVRADVGRGHLVTQVQALDPDDGANSRITYSLYSEASVSVADLLEIDPDNGWMVTKGNFNQLRNTVLSFFVKAVDGGIPVRHSLIPVYIHVLPPETFLPSFTQSQYSFTIAEDTSIGSTIDTLRILPNQSVRFSTVNGERPENNKENVFIIEQETGAIKLDKRLDHEVSPAFHFKVAATIPLDKVDIVFTVDVDVKVLDLNDNKPVFETSSYETIIMEGMPVGTKLAQVRAIDTDWGANGQVTYSLHSDSHLEKVMEAFNIDSNTGWISTLKDLDHETDPTFSFFVVASDLGEAFSLSSMALVSVKVTDINDNAPVFAHEVYRGNVKESDPPGEVVAVLSTLDKDTSNINRQVSYHITGGNPRGRFALGMVQSEWKVYVKRPLDREEQDIYFLNITASDGLFVTQAMVEVTVSDVNDNSPVCDQVAYSASLPEDIPSNKIILKVSAKDADIGSNGDIRYSLYGSGNSDFFLDPESGELKTLALLDRERVPVYNLIARATDGGGRFCSSTVLLLLEDVNDNPPVFSSNHYTACVYENTATKALLTRVQAVDPDVGINRKVVYSLEDSASGVFSIDSSSGVIVLEQPLDREQQSSYNISVRATDQSPGQSLSSLTSVTITVLDINDNPPVFERRDYLVTVPEDTSLGTQVLSVFATSKDIGTNAEITYLIRSGNEQGKFRINPKTGGISVLEALDYEMCKRFYLVVEAKDGGTPALSTAATVSIDLTDVNDNPPRFSQDVYSAVISEDALEGDSVILLIAEDVDSKPNGQIRFSIVGGDRDNEFAVDPILGLVKVKKKLDRERVSGYSLLIQAVDSGIPAMSSTTTVNIDISDVNDNSPVFTPANYTAVIQENKPVGTSILQLVVTDRDSFHNGPPFSFSILSGNEDEEFMLDSHGILRSAVVFRHMESPEYLLCIQAKDSGKPQQVSHTYIRVRVIEESTHKPTAIPLEIFIVTMEDDFPGGVIGKIHATDQDMYDVLTFALKSEQKSLFKVNSHDGKIIALGGLDSGKYVLNVSVSDGRFQVPIDVVVHVEQLVHEMLQNTVTIRFENVSPEDFVGLHMHGFRRILRNAVLTQKQDSLRIISIQPVVGTNQLDMLFAVEMHSSEFYKPAYLIQKLSNARRHLENVMHIAAILEKNCSGLDCQEQHCEQGLSLDSHALMTYSTARISFVCPRFYRNVRCTCNGGVCPGSNDPCVEKPCPEDMQCVGYEASRRPFLCQCPPGKLGECSGHTSLSFAGNSYIKYRLSENSREEDFKLALRLRTLQSNGIIMYTRANPCMILKIVEGKLWFQLDCGSGPGILGISSRAVNDGSWHSVFLELNRNFTSLSLDDSYVERRRAPLYFQTLSTDSAIFFGALVQADNIRSLTDTRVTQVLGGFQGCLDSVVLNHNELPLQNKRSSFAEVVGLTELKLGCVLYPDACQRSPCLHGGSCSGLPSGGYQCSCLSQFTGTNCESEITACFPNPCRNGGSCDPIGNTFICSCKAGLTGVTCEDDVDECEREECENGGSCVNLFGSFFCNCTPGYVGQYCGLRPVVVPNIQAGHSYVGKEELIGIAVVLFVIFTLIVLFIVFRKKVFRKNYSRNNITLVQDPATAALLHKSNGIPFRSLRAGDGRNVYQEVGPPQVPVRPMAYTPCFQSDSRSNLDKGLDALGGEPQELSTFHPESPRILTARRGVVVCSVAPNLPAVSPCRSDCDSIRKNGWDTGSENKGAEDTGEVTCFANSNKGSNSEVQSLNSFQSDSGDDNAYHWDTSDWMPGARLSDIEEMPNYESQDGGAVHQGSTRELESDYYLGGYDIDSEYPPPHEEEFLSQDQLPPPLPEDFPEQYEALPPSQPTSLTGTMSPDCRRRPRFHPSQYLPPHPLPGETDLGGPPSSCDFSTFAVSMNQGTEVMAPTDSVSLSLHNSRGTSSSDMSARCGFDDSEVAMSDYESAGELSLTNLHIPFVETQHQTQV.

Positions 1 to 31 (MGVTMRHCIDTRPPSCLIFLLLKLCATVSQG) are cleaved as a signal peptide. Residues 32–4153 (LPGTGPLGFH…AGHSYVGKEE (4122 aa)) are Extracellular-facing. Cadherin domains lie at 43-157 (THAL…RPLF), 158-265 (SPTT…APII), 263-374 (PIIH…TPIK), 376-471 (EKDV…TPEF), 472-577 (QETL…SPLF), 578-680 (EKVA…SKSF), 726-830 (KSFP…SPVF), 831-935 (LQDS…SPAF), 936-1042 (IPSS…TPYF), 1043-1147 (PDFA…APLT), 1148-1253 (SEPI…KPQF), 1254-1358 (PEKV…SPIP), 1362-1459 (DEPF…GPEF), 1460-1565 (SQPH…SPYF), 1566-1768 (TNPL…PPVF), 1769-1882 (LFSQ…PPVF), 1883-1985 (TQAV…TQSF), 1982-2083 (TQSF…SPVF), 2084-2185 (VGLP…MPVF), 2186-2286 (DKPF…PPVF), 2287-2393 (DQPT…PPVF), 2394-2495 (NQLI…SPAF), 2496-2599 (SQST…APQF), 2600-2707 (MTLE…LPSF), 2708-2813 (TQSQ…KPVF), 2814-2923 (ETSS…APVF), 2924-3028 (AHEV…SPVC), 3029-3130 (DQVA…PPVF), 3131-3235 (SSNH…PPVF), 3236-3340 (ERRD…PPRF), 3341-3445 (SQDV…SPVF), 3446-3550 (TPAN…KPTA), and 3551-3652 (IPLE…TIRF). Asn48 is a glycosylation site (N-linked (GlcNAc...) asparagine). The N-linked (GlcNAc...) asparagine glycan is linked to Asn341. N-linked (GlcNAc...) asparagine glycans are attached at residues Asn481, Asn562, Asn667, Asn799, Asn879, Asn898, and Asn1006. Asn1367 and Asn1429 each carry an N-linked (GlcNAc...) asparagine glycan. A glycan (N-linked (GlcNAc...) asparagine) is linked at Asn1751. Residues Asn1944, Asn1993, and Asn1996 are each glycosylated (N-linked (GlcNAc...) asparagine). 4 N-linked (GlcNAc...) asparagine glycosylation sites follow: Asn2208, Asn2292, Asn2331, and Asn2467. Asn2734 carries N-linked (GlcNAc...) asparagine glycosylation. Asn3000 is a glycosylation site (N-linked (GlcNAc...) asparagine). Residue Asn3201 is glycosylated (N-linked (GlcNAc...) asparagine). N-linked (GlcNAc...) asparagine glycans are attached at residues Asn3449, Asn3618, and Asn3741. Residues 3794–3832 (SNDPCVEKPCPEDMQCVGYEASRRPFLCQCPPGKLGECS) enclose the EGF-like 1 domain. 3 disulfide bridges follow: Cys3798/Cys3809, Cys3803/Cys3821, and Cys3823/Cys3831. Residues 3834–4017 (HTSLSFAGNS…VGLTELKLGC (184 aa)) form the Laminin G-like domain. N-linked (GlcNAc...) asparagine glycosylation occurs at Asn3926. Disulfide bonds link Cys3984–Cys4017, Cys4024–Cys4035, Cys4029–Cys4045, Cys4047–Cys4056, Cys4063–Cys4074, Cys4068–Cys4083, Cys4085–Cys4094, Cys4101–Cys4112, Cys4106–Cys4121, and Cys4123–Cys4132. EGF-like domains follow at residues 4020 to 4057 (YPDA…TNCE) and 4059 to 4095 (EITA…VTCE). The region spanning 4097–4133 (DVDECEREECENGGSCVNLFGSFFCNCTPGYVGQYCG) is the EGF-like 4; calcium-binding domain. A helical transmembrane segment spans residues 4154–4174 (LIGIAVVLFVIFTLIVLFIVF). Over 4175–4555 (RKKVFRKNYS…FVETQHQTQV (381 aa)) the chain is Cytoplasmic. Polar residues predominate over residues 4326 to 4343 (SNKGSNSEVQSLNSFQSD). Disordered stretches follow at residues 4326 to 4347 (SNKG…SGDD), 4395 to 4424 (GGYD…LPED), and 4452 to 4472 (PRFH…TDLG). Omega-N-methylarginine is present on residues Arg4508 and Arg4518.

Restricted to the nervous system. Abundantly expressed in the fetal brain.

It localises to the membrane. Its function is as follows. May play a role in the interactions between neurites derived from specific subsets of neurons during development. The sequence is that of Protocadherin Fat 3 (Fat3) from Rattus norvegicus (Rat).